A 102-amino-acid chain; its full sequence is Neuropeptide F (102 aa).

The N-terminal stretch at 1 to 29 (MSNTMRCILIVCVALTLIAAGCNVEASNS) is a signal peptide. A propeptide spanning residues 30–32 (RPP) is cleaved from the precursor. Phenylalanine amide is present on Phe-62. The propeptide occupies 66–102 (GGPLMEMLRNRELENNMAKSINSGGELIRALDEEEVF).

This sequence belongs to the NPY family.

It localises to the secreted. In terms of biological role, an integral part of the sensory system that mediates food signaling, providing the neural basis for the regulation of food response; coordinates larval foraging and social behavior changes during development. May have a hormonal role in females. This is Neuropeptide F from Drosophila pseudoobscura pseudoobscura (Fruit fly).